A 936-amino-acid chain; its full sequence is Lon protease homolog, mitochondrial (936 aa).

Residues 1 to 40 (MYATRAIARRLERHAARCKGAHVARAVRGARARTTSAPRA) constitute a mitochondrion transit peptide. The interval 65 to 95 (AFVSSVDGDGSTGSTGSSSSSSSSAFGDSAS) is disordered. Over residues 66 to 95 (FVSSVDGDGSTGSTGSSSSSSSSAFGDSAS) the composition is skewed to low complexity. The 241-residue stretch at 112–352 (VLAVPLPRRP…ATLELLKKEV (241 aa)) folds into the Lon N-terminal domain. 507–514 (GPPGVGKT) provides a ligand contact to ATP. The Lon proteolytic domain occupies 748-932 (VTPPGVVTGL…DEVYRQALDW (185 aa)). Catalysis depends on residues Ser-838 and Lys-881.

It belongs to the peptidase S16 family. As to quaternary structure, homohexamer or homoheptamer. Organized in a ring with a central cavity.

The protein localises to the mitochondrion matrix. It carries out the reaction Hydrolysis of proteins in presence of ATP.. ATP-dependent serine protease that mediates the selective degradation of misfolded, unassembled or oxidatively damaged polypeptides as well as certain short-lived regulatory proteins in the mitochondrial matrix. May also have a chaperone function in the assembly of inner membrane protein complexes. Participates in the regulation of mitochondrial gene expression and in the maintenance of the integrity of the mitochondrial genome. Binds to mitochondrial DNA in a site-specific manner. This is Lon protease homolog, mitochondrial from Ostreococcus lucimarinus (strain CCE9901).